A 123-amino-acid polypeptide reads, in one-letter code: Large ribosomal subunit protein bL21 (123 aa).

This sequence belongs to the bacterial ribosomal protein bL21 family. Part of the 50S ribosomal subunit. Contacts protein L20.

Functionally, this protein binds to 23S rRNA in the presence of protein L20. The chain is Large ribosomal subunit protein bL21 from Rippkaea orientalis (strain PCC 8801 / RF-1) (Cyanothece sp. (strain PCC 8801)).